We begin with the raw amino-acid sequence, 335 residues long: Vitamin B12 import system permease protein BtuC (335 aa).

Transmembrane regions (helical) follow at residues 25 to 45, 67 to 87, 94 to 113, 117 to 139, 153 to 173, 243 to 263, 281 to 301, and 309 to 329; these read LVVM…VWIW, MAVI…QALF, PGLL…AVLL, LLPI…SILL, LLVG…AVYF, VLAI…ISFI, RLLA…DVVA, and ELPI…WLLI.

Belongs to the binding-protein-dependent transport system permease family. FecCD subfamily. As to quaternary structure, the complex is composed of two ATP-binding proteins (BtuD), two transmembrane proteins (BtuC) and a solute-binding protein (BtuF).

It is found in the cell inner membrane. Functionally, part of the ABC transporter complex BtuCDF involved in vitamin B12 import. Involved in the translocation of the substrate across the membrane. This is Vitamin B12 import system permease protein BtuC from Yersinia pseudotuberculosis serotype O:1b (strain IP 31758).